A 510-amino-acid polypeptide reads, in one-letter code: NAD(P)H-quinone oxidoreductase subunit 2 A, chloroplastic (510 aa).

Transmembrane regions (helical) follow at residues 31–51 (FIFP…IDLT), 57–77 (TPWL…ALLF), 99–119 (IFQF…VEYI), 124–144 (MAIT…MFLC), 149–169 (LITI…LSGY), 183–203 (YLLM…WLYG), 229–249 (ISIA…PAPF), 295–315 (WHLL…LIAI), 323–343 (MLAY…IVGD), 354–374 (YMLF…LFGL), 395–415 (ALSS…AGFF), 418–438 (LYLF…IGLL), and 484–504 (MIVC…IIAI).

Belongs to the complex I subunit 2 family. NDH is composed of at least 16 different subunits, 5 of which are encoded in the nucleus.

It localises to the plastid. Its subcellular location is the chloroplast thylakoid membrane. The catalysed reaction is a plastoquinone + NADH + (n+1) H(+)(in) = a plastoquinol + NAD(+) + n H(+)(out). The enzyme catalyses a plastoquinone + NADPH + (n+1) H(+)(in) = a plastoquinol + NADP(+) + n H(+)(out). In terms of biological role, NDH shuttles electrons from NAD(P)H:plastoquinone, via FMN and iron-sulfur (Fe-S) centers, to quinones in the photosynthetic chain and possibly in a chloroplast respiratory chain. The immediate electron acceptor for the enzyme in this species is believed to be plastoquinone. Couples the redox reaction to proton translocation, and thus conserves the redox energy in a proton gradient. The chain is NAD(P)H-quinone oxidoreductase subunit 2 A, chloroplastic from Nymphaea alba (White water-lily).